The following is a 99-amino-acid chain: Small ribosomal subunit protein uS19 (99 aa).

A disordered region spans residues P76 to K99.

Belongs to the universal ribosomal protein uS19 family.

Functionally, protein S19 forms a complex with S13 that binds strongly to the 16S ribosomal RNA. This chain is Small ribosomal subunit protein uS19, found in Pelodictyon phaeoclathratiforme (strain DSM 5477 / BU-1).